The chain runs to 256 residues: tRNA (guanine-N(7)-)-methyltransferase (256 aa).

Over residues Met-1 to Thr-11 the composition is skewed to polar residues. Residues Met-1 to Arg-35 are disordered. S-adenosyl-L-methionine contacts are provided by Glu-85, Glu-110, Asp-137, and Asp-160. Asp-160 is an active-site residue. Lys-164 serves as a coordination point for substrate. An interaction with RNA region spans residues Arg-166–Arg-171. Substrate is bound by residues Asp-196 and Thr-234 to Glu-237.

Belongs to the class I-like SAM-binding methyltransferase superfamily. TrmB family.

It catalyses the reaction guanosine(46) in tRNA + S-adenosyl-L-methionine = N(7)-methylguanosine(46) in tRNA + S-adenosyl-L-homocysteine. It functions in the pathway tRNA modification; N(7)-methylguanine-tRNA biosynthesis. Its function is as follows. Catalyzes the formation of N(7)-methylguanine at position 46 (m7G46) in tRNA. The polypeptide is tRNA (guanine-N(7)-)-methyltransferase (Cupriavidus pinatubonensis (strain JMP 134 / LMG 1197) (Cupriavidus necator (strain JMP 134))).